The following is an 801-amino-acid chain: Mitochondrial intermediate peptidase (801 aa).

Residues Met1–Phe41 constitute a mitochondrion transit peptide. Zn(2+) is bound at residue His564. The active site involves Glu565. Zn(2+) contacts are provided by His568 and His571.

It belongs to the peptidase M3 family. The cofactor is Zn(2+).

It localises to the mitochondrion matrix. The enzyme catalyses Release of an N-terminal octapeptide as second stage of processing of some proteins imported into the mitochondrion.. In terms of biological role, cleaves proteins, imported into the mitochondrion, to their mature size. While most mitochondrial precursor proteins are processed to the mature form in one step by mitochondrial processing peptidase (MPP), the sequential cleavage by MIP of an octapeptide after initial processing by MPP is a required step for a subgroup of nuclear-encoded precursor proteins destined for the matrix or the inner membrane. This chain is Mitochondrial intermediate peptidase (oct1), found in Aspergillus fumigatus (strain CBS 144.89 / FGSC A1163 / CEA10) (Neosartorya fumigata).